The chain runs to 440 residues: Gap junction gamma-2 protein (440 aa).

At 1–21 (MTNMSWSFLTRLLEEIHNHST) the chain is on the cytoplasmic side. A helical membrane pass occupies residues 22–42 (FVGKVWLTVLVVFRIVLTAVG). Residues 43–78 (GESIYSDEQSKFTCNTRQPGCDNVCYDAFAPLSHVR) are Extracellular-facing. Residues 79–99 (FWVFQIVVISTPSVMYLGYAV) traverse the membrane as a helical segment. Over 100 to 223 (HRLARASEQE…AQLVVRAAFE (124 aa)) the chain is Cytoplasmic. The tract at residues 108-199 (QERRRALRRR…TPGPAGQHDG (92 aa)) is disordered. The span at 112–124 (RALRRRPGTRRLP) shows a compositional bias: basic residues. Residues 136-149 (PDTTDLGEAEPILA) show a composition bias toward low complexity. The span at 150-173 (LEEDEDEEPGAPEGPGEDTEEERA) shows a compositional bias: acidic residues. The helical transmembrane segment at 224–244 (VAFLVGQYLLYGFEVPPFFAC) threads the bilayer. Over 245–264 (SRQPCPHVVDCFVSRPTEKT) the chain is Extracellular. Residues 265–285 (VFLLVMYVVSCLCLLLNLCEM) traverse the membrane as a helical segment. Over 286–440 (AHLGLGSAQD…SRDGKATVWI (155 aa)) the chain is Cytoplasmic. The tract at residues 369 to 440 (DRDSPPCAGL…SRDGKATVWI (72 aa)) is disordered. Serine 372 carries the phosphoserine modification. Residues 388 to 401 (VGGLASGTGSATSG) are compositionally biased toward low complexity.

The protein belongs to the connexin family. Gamma-type subfamily. As to quaternary structure, a connexon is composed of a hexamer of connexins. Interacts with TJP1. In terms of tissue distribution, mainly expressed by oligodendrocytes in the central nervous system (at protein level).

It is found in the cell membrane. Its subcellular location is the cell junction. The protein localises to the gap junction. Its function is as follows. One gap junction consists of a cluster of closely packed pairs of transmembrane channels, the connexons, through which materials of low MW diffuse from one cell to a neighboring cell. May play a role in myelination in central and peripheral nervous systems. The protein is Gap junction gamma-2 protein (Gjc2) of Mus musculus (Mouse).